The following is a 41-amino-acid chain: Large ribosomal subunit protein bL36 (41 aa).

It belongs to the bacterial ribosomal protein bL36 family.

This chain is Large ribosomal subunit protein bL36, found in Rhodopseudomonas palustris (strain BisB5).